Here is a 770-residue protein sequence, read N- to C-terminus: Probable methyltransferase PMT24 (770 aa).

The Cytoplasmic segment spans residues 1-17; sequence MAMGKYSRVDGKKSSGY. Residues 18-38 form a helical; Signal-anchor for type II membrane protein membrane-spanning segment; sequence GLTITIVLIVSLCLVGAWMFM. Residues 39 to 770 are Lumenal-facing; it reads SSWSAPTESI…EAETIQSAIA (732 aa). Basic and acidic residues-rich tracts occupy residues 54–81 and 93–164; these read ERTK…FPDE and NEEK…KSED. The segment at 54–223 is disordered; that stretch reads ERTKDVDTTK…STGSGAWSTQ (170 aa). Residues N160 and N166 are each glycosylated (N-linked (GlcNAc...) asparagine). Residues 212–223 show a composition bias toward polar residues; the sequence is ESSTGSGAWSTQ. N-linked (GlcNAc...) asparagine glycosylation is found at N244 and N363.

Belongs to the methyltransferase superfamily.

Its subcellular location is the golgi apparatus membrane. The sequence is that of Probable methyltransferase PMT24 from Arabidopsis thaliana (Mouse-ear cress).